The following is a 200-amino-acid chain: Exopolysaccharide production protein PSS (200 aa).

The protein belongs to the bacterial sugar transferase family.

This Rhizobium leguminosarum bv. phaseoli protein is Exopolysaccharide production protein PSS (pss).